We begin with the raw amino-acid sequence, 294 residues long: Acetyl-coenzyme A carboxylase carboxyl transferase subunit beta (294 aa).

Residues 25-294 form the CoA carboxyltransferase N-terminal domain; the sequence is VWTKCTACEQ…PFLEPEIIAD (270 aa). Positions 29, 32, 48, and 51 each coordinate Zn(2+). The C4-type zinc finger occupies 29 to 51; it reads CTACEQVLYRDELKRHLEVCPKC.

This sequence belongs to the AccD/PCCB family. Acetyl-CoA carboxylase is a heterohexamer composed of biotin carboxyl carrier protein (AccB), biotin carboxylase (AccC) and two subunits each of ACCase subunit alpha (AccA) and ACCase subunit beta (AccD). Zn(2+) is required as a cofactor.

The protein resides in the cytoplasm. The catalysed reaction is N(6)-carboxybiotinyl-L-lysyl-[protein] + acetyl-CoA = N(6)-biotinyl-L-lysyl-[protein] + malonyl-CoA. It participates in lipid metabolism; malonyl-CoA biosynthesis; malonyl-CoA from acetyl-CoA: step 1/1. Component of the acetyl coenzyme A carboxylase (ACC) complex. Biotin carboxylase (BC) catalyzes the carboxylation of biotin on its carrier protein (BCCP) and then the CO(2) group is transferred by the transcarboxylase to acetyl-CoA to form malonyl-CoA. This chain is Acetyl-coenzyme A carboxylase carboxyl transferase subunit beta, found in Actinobacillus succinogenes (strain ATCC 55618 / DSM 22257 / CCUG 43843 / 130Z).